The following is a 241-amino-acid chain: Tetraspanin-1 (241 aa).

Residues 1–11 are Cytoplasmic-facing; it reads MQCFSFIKTMM. Residues 12–34 traverse the membrane as a helical segment; that stretch reads ILFNLLIFLCGAALLAVGIWVSI. Residues 35–53 lie on the Extracellular side of the membrane; it reads DGASFLKIFGPLSSSAMQF. The helical transmembrane segment at 54–76 threads the bilayer; that stretch reads VNVGYFLIAAGVVVFALGFLGCY. Residues 77-88 are Cytoplasmic-facing; that stretch reads GAKTESKCALMT. The chain crosses the membrane as a helical span at residues 89 to 111; the sequence is FFFILLLIFIAEVAAAVVALVYT. The Extracellular segment spans residues 112–214; it reads TMAEHFLTLL…LYDIRTNAVT (103 aa). N-linked (GlcNAc...) asparagine glycosylation is found at asparagine 141, asparagine 154, asparagine 178, and asparagine 184. Residues 215-237 traverse the membrane as a helical segment; sequence VGGVAAGIGGLELAAMIVSMYLY. Over 238 to 241 the chain is Cytoplasmic; sequence CNLQ.

This sequence belongs to the tetraspanin (TM4SF) family. Interacts with SLC19A2. Interacts with NTRK1/TRKA.

The protein resides in the lysosome membrane. Functionally, structural component of specialized membrane microdomains known as tetraspanin-enriched microdomains (TERMs), which act as platforms for receptor clustering and signaling. Participates thereby in diverse biological functions such as cell signal transduction, adhesion, migration and protein trafficking. Regulates neuronal differentiation in response to NGF by facilitating NGF-mediated activation of NTRK1/TRKA receptor tyrosine kinase and subsequent downstream signaling pathways. Plays a role in the inhibition of TNFalpha-induced apoptosis. Mechanistically, inhibits the NF-kappa-B signaling pathway by blocking phosphorylation of CHUK. Also promotes the stability of the thiamine transporter 1/SLC19A2 in intestinal epithelial cells leading to an increase of thiamine uptake process. The protein is Tetraspanin-1 (TSPAN1) of Pongo abelii (Sumatran orangutan).